A 243-amino-acid polypeptide reads, in one-letter code: Ribonuclease HII (243 aa).

Residues 23 to 217 enclose the RNase H type-2 domain; sequence SVIVGVDEVG…LSSECEGAPP (195 aa). Asp-29, Glu-30, and Asp-122 together coordinate a divalent metal cation. The disordered stretch occupies residues 223 to 243; sequence LSSTGIKTPVDGRGDAVATRD. The span at 232 to 243 shows a compositional bias: basic and acidic residues; it reads VDGRGDAVATRD.

The protein belongs to the RNase HII family. The cofactor is Mn(2+). It depends on Mg(2+) as a cofactor.

Its subcellular location is the cytoplasm. The catalysed reaction is Endonucleolytic cleavage to 5'-phosphomonoester.. Endonuclease that specifically degrades the RNA of RNA-DNA hybrids. This Anaplasma marginale (strain St. Maries) protein is Ribonuclease HII.